The chain runs to 256 residues: Protein RGF1 INDUCIBLE TRANSCRIPTION FACTOR 1 (256 aa).

Residues 21–59 (CPYHETAKKNERNVCCLDCCTSLCPHCVPSHRFHRLLQV) form a B box-type zinc finger.

In terms of tissue distribution, expressed predominantly in root meristematic zones.

Its subcellular location is the nucleus. In terms of biological role, probable transcription factor that plays a central role in mediating RGF1 hormone peptide signaling leading to the production of reactive oxygen species (ROS) in roots to modulate meristem size and root growth, probably via oxidative post-translational modification of the transcription factor PLETHORA (e.g. PLT1 and PLT2). The chain is Protein RGF1 INDUCIBLE TRANSCRIPTION FACTOR 1 from Arabidopsis thaliana (Mouse-ear cress).